The following is a 102-amino-acid chain: NADH-quinone oxidoreductase subunit K (102 aa).

3 helical membrane passes run 5–25 (LSHYLTVSAILFTLGVFGIFL), 31–51 (IVILMSIELILLAVNINMVAF), and 65–85 (LFILTVAAAEAAIGLAILVVF).

It belongs to the complex I subunit 4L family. NDH-1 is composed of 14 different subunits. Subunits NuoA, H, J, K, L, M, N constitute the membrane sector of the complex.

It localises to the cell inner membrane. It catalyses the reaction a quinone + NADH + 5 H(+)(in) = a quinol + NAD(+) + 4 H(+)(out). In terms of biological role, NDH-1 shuttles electrons from NADH, via FMN and iron-sulfur (Fe-S) centers, to quinones in the respiratory chain. The immediate electron acceptor for the enzyme in this species is believed to be ubiquinone. Couples the redox reaction to proton translocation (for every two electrons transferred, four hydrogen ions are translocated across the cytoplasmic membrane), and thus conserves the redox energy in a proton gradient. The protein is NADH-quinone oxidoreductase subunit K of Rhizobium johnstonii (strain DSM 114642 / LMG 32736 / 3841) (Rhizobium leguminosarum bv. viciae).